The sequence spans 61 residues: Small ribosomal subunit protein uS14 (61 aa).

4 residues coordinate Zn(2+): Cys24, Cys27, Cys40, and Cys43.

This sequence belongs to the universal ribosomal protein uS14 family. Zinc-binding uS14 subfamily. In terms of assembly, part of the 30S ribosomal subunit. Contacts proteins S3 and S10. Requires Zn(2+) as cofactor.

Its function is as follows. Binds 16S rRNA, required for the assembly of 30S particles and may also be responsible for determining the conformation of the 16S rRNA at the A site. This chain is Small ribosomal subunit protein uS14, found in Anoxybacillus flavithermus (strain DSM 21510 / WK1).